Reading from the N-terminus, the 496-residue chain is UDP-N-acetylmuramoylalanine--D-glutamate ligase (496 aa).

Residue glycine 130–threonine 136 coordinates ATP.

This sequence belongs to the MurCDEF family. Interacts with PknA. In terms of processing, phosphorylated by PknA.

The protein resides in the cytoplasm. It catalyses the reaction UDP-N-acetyl-alpha-D-muramoyl-L-alanine + D-glutamate + ATP = UDP-N-acetyl-alpha-D-muramoyl-L-alanyl-D-glutamate + ADP + phosphate + H(+). The protein operates within cell wall biogenesis; peptidoglycan biosynthesis. Cell wall formation. Catalyzes the addition of glutamate to the nucleotide precursor UDP-N-acetylmuramoyl-L-alanine (UMA). This is UDP-N-acetylmuramoylalanine--D-glutamate ligase from Mycobacterium tuberculosis (strain ATCC 25177 / H37Ra).